Reading from the N-terminus, the 1296-residue chain is Protein ORF75 (1296 aa).

The protein localises to the virion tegument. In Homo sapiens (Human), this protein is Protein ORF75 (ORF75).